The chain runs to 71 residues: MRQEIHPKYTEVTVTCSCGNTFVTRSTVGKKEMNIDICSECHPFYTGKQRIVDTAGRVDKFKKRFGGMKKI.

Residues cysteine 16, cysteine 18, cysteine 38, and cysteine 41 each coordinate Zn(2+).

The protein belongs to the bacterial ribosomal protein bL31 family. Type A subfamily. In terms of assembly, part of the 50S ribosomal subunit. Zn(2+) serves as cofactor.

Functionally, binds the 23S rRNA. This is Large ribosomal subunit protein bL31 from Francisella tularensis subsp. novicida (strain U112).